Reading from the N-terminus, the 456-residue chain is Bis(5'-adenosyl)-triphosphatase enpp4 (456 aa).

An N-terminal signal peptide occupies residues 1–18 (MFNMKILVIPLFWGLVTG). The Extracellular portion of the chain corresponds to 19-410 (YKGNSSDSSA…DQWCINLPEA (392 aa)). Positions 37 and 73 each coordinate Zn(2+). Residue threonine 73 is the AMP-threonine intermediate of the active site. Asparagine 94 is a substrate binding site. Residue asparagine 148 is glycosylated (N-linked (GlcNAc...) asparagine). Tyrosine 157 lines the substrate pocket. Residue asparagine 169 is glycosylated (N-linked (GlcNAc...) asparagine). The Zn(2+) site is built by aspartate 192, histidine 196, aspartate 240, and histidine 241. Aspartate 192 serves as a coordination point for substrate. A disulfide bridge connects residues cysteine 257 and cysteine 290. Asparagine 279 and asparagine 330 each carry an N-linked (GlcNAc...) asparagine glycan. Histidine 339 contacts Zn(2+). N-linked (GlcNAc...) asparagine glycosylation occurs at asparagine 389. Cysteine 397 and cysteine 404 are joined by a disulfide. A helical membrane pass occupies residues 411-431 (IGIVVSALLVLTMLTGLMIFM). Topologically, residues 432–456 (RSRASTSRPFSRLQLQEDDDDPLID) are cytoplasmic.

Belongs to the nucleotide pyrophosphatase/phosphodiesterase family. Zn(2+) serves as cofactor.

It localises to the cell membrane. The catalysed reaction is P(1),P(3)-bis(5'-adenosyl) triphosphate + H2O = AMP + ADP + 2 H(+). Functionally, hydrolyzes extracellular Ap3A into AMP and ADP, and Ap4A into AMP and ATP. Ap3A and Ap4A are diadenosine polyphosphates thought to induce proliferation of vascular smooth muscle cells. Acts as a procoagulant, mediating platelet aggregation at the site of nascent thrombus via release of ADP from Ap3A and activation of ADP receptors. This is Bis(5'-adenosyl)-triphosphatase enpp4 (Enpp4) from Mus musculus (Mouse).